A 1594-amino-acid chain; its full sequence is MKLYVFLVNTGTTLTFDTELTVQTVADLKHAIQSKYKIAIQHQVLVVNGGECMAADRRVCTYSAGTDTNPIFLFNKEMILCDRPPAIPKTTFSTENDMEIKVEESLMMPAVFHTVASRTQLALEMYEVAKKLCSFCEGLVHDEHLQHQGWAAIMANLEDCSNSYQKLLFKFESIYSNYLQSIEDIKLKLTHLGTAVSVMAKIPLLECLTRHSYRECLGRLDSLPEHEDSEKAEMKRSTELVLSPDMPRTTNESLLTSFPKSVEHVSPDTADAESGKEIRESCQSTVHQQDETTIDTKDGDLPFFNVSLLDWINVQDRPNDVESLVRKCFDSMSRLDPRIIRPFIAECRQTIAKLDNQNMKAIKGLEDRLYALDQMIASCGRLVNEQKELAQGFLANQKRAENLKDASVLPDLCLSHANQLMIMLQNHRKLLDIKQKCTTAKQELANNLHVRLKWCCFVMLHADQDGEKLQALLRLVIELLERVKIVEALSTVPQMYCLAVVEVVRRKMFIKHYREWAGALVKDGKRLYEAEKSKRESFGKLFRKSFLRNRLFRGLDSWPPSFCTQKPRKFDCELPDISLKDLQFLQSFCPSEVQPFLRVPLLCDFEPLHQHVLALHNLVKAAQSLDEMSQTITDLLSEQKASVSQTSPQSASSPRMESTAGITTTTSPRTPPPLTVQDPLCPAVCPLEELSPDSIDAHTFDFETIPHPNIEQTIHQVSLDLDSLAESPESDFMSAVNEFVIEENLSSPNPISDPQSPEMMVESLYSSVINAIDSRRMQDTNVCGKEDFGDHTSLNVQLERCRVVAQDSHFSIQTIKEDLCHFRTFVQKEQCDFSNSLKCTAVEIRNIIEKVKCSLEITLKEKHQKELLSLKNEYEGKLDGLIKETEENENKIKKLKGELVCLEEVLQNKDNEFALVKHEKEAVICLQNEKDQKLLEMENIMHSQNCEIKELKQSREIVLEDLKKLHVENDEKLQLLRAELQSLEQSHLKELEDTLQVRHIQEFEKVMTDHRVSLEELKKENQQIINQIQESHAEIIQEKEKQLQELKLKVSDLSDTRCKLEVELALKEAETDEIKILLEESRAQQKETLKSLLEQETENLRTEISKLNQKIQDNNENYQVGLAELRTLMTIEKDQCISELISRHEEESNILKAELNKVTSLHNQAFEIEKNLKEQIIELQSKLDSELSALERQKDEKITQQEEKYEAIIQNLEKDRQKLVSSQEQDREQLIQKLNCEKDEAIQTALKEFKLEREVVEKELLEKVKHLENQIAKSPAIDSTRGDSSSLVAELQEKLQEEKAKFLEQLEEQEKRKNEEMQNVRTSLIAEQQTNFNTVLTREKMRKENIINDLSDKLKSTMQQQERDKDLIESLSEDRARLLEEKKKLEEEVSKLRSSSFVPSPYVATAPELYGACAPELPGESDRSAVETADEGRVDSAMETSMMSVQENIHMLSEEKQRIMLLERTLQLKEEENKRLNQRLMSQSMSSVSSRHSEKIAIRDFQVGDLVLIILDERHDNYVLFTVSPTLYFLHSESLPALDLKPGEGASGASRRPWVLGKVMEKEYCQAKKAQNRFKVPLGTKFYRVKAVSWNKKV.

A phosphoserine mark is found at Ser-222, Ser-229, and Ser-237. Residue Thr-238 is modified to Phosphothreonine. Residues Ser-243, Ser-253, Ser-257, Ser-261, and Ser-266 each carry the phosphoserine modification. The short motif at 566–569 (KPRK) is the Nuclear localization signal element. Phosphoserine occurs at positions 624, 647, 650, 652, 653, 734, 1091, 1222, 1370, and 1484. Residues 638–673 (EQKASVSQTSPQSASSPRMESTAGITTTTSPRTPPP) are disordered. Residues 641 to 654 (ASVSQTSPQSASSP) are compositionally biased toward low complexity. The FFAT signature appears at 731 to 737 (DFMSAVN). 2 coiled-coil regions span residues 859 to 1397 (LKEK…SSSF) and 1438 to 1485 (METS…SQSM).

Belongs to the ATG17 family. Part of a complex consisting of ATG13/KIAA0652, ULK1 and RB1CC1. This complex associates with ATG101. Interacts with PTK2/FAK1 and PTK2B/PYK2. Interacts with GABARAP and GABARAPL1. Interacts with ATG16L1; the interaction is required for ULK1 complex-dependent autophagy. Interacts with RNF111, SKI and SMAD7. Interacts with COP1 in the cytoplasm of proliferating cells in response to UV stimulation. Interacts with TP53. Interacts with C9orf72. Interacts with WDR45B. Interacts with ATG13; this interaction is increased in the absence of TMEM39A. Interacts with WIPI2. Interacts with TAX1BP1. Interacts (via phosphorylated FFAT motif) with MOSPD2, VAPA and VAPB. In terms of processing, phosphorylation at Ser-734 of the FFAT motif activates interaction with MOSPD2, VAPA and VAPB. As to expression, expression levels correlated closely with those of RB1 in cancer cell lines as well as in various normal human tissues. Abundantly expressed in human musculoskeletal and cultured osteosarcoma cells.

It localises to the nucleus. The protein localises to the cytoplasm. It is found in the cytosol. The protein resides in the preautophagosomal structure. Its subcellular location is the lysosome. Functionally, involved in autophagy. Regulates early events but also late events of autophagosome formation through direct interaction with Atg16L1. Required for the formation of the autophagosome-like double-membrane structure that surrounds the Salmonella-containing vacuole (SCV) during S.typhimurium infection and subsequent xenophagy. Involved in repair of DNA damage caused by ionizing radiation, which subsequently improves cell survival by decreasing apoptosis. Inhibits PTK2/FAK1 and PTK2B/PYK2 kinase activity, affecting their downstream signaling pathways. Plays a role as a modulator of TGF-beta-signaling by restricting substrate specificity of RNF111. Functions as a DNA-binding transcription factor. Is a potent regulator of the RB1 pathway through induction of RB1 expression. Plays a crucial role in muscular differentiation. Plays an indispensable role in fetal hematopoiesis and in the regulation of neuronal homeostasis. In Homo sapiens (Human), this protein is RB1-inducible coiled-coil protein 1.